The chain runs to 229 residues: Protein fmp52-2, mitochondrial (229 aa).

Residues M1 to K44 constitute a mitochondrion transit peptide.

Belongs to the FMP52 family.

The protein resides in the mitochondrion outer membrane. The polypeptide is Protein fmp52-2, mitochondrial (fmp522) (Aspergillus terreus (strain NIH 2624 / FGSC A1156)).